Here is a 216-residue protein sequence, read N- to C-terminus: Probable nicotinate-nucleotide adenylyltransferase (216 aa).

Belongs to the NadD family.

It carries out the reaction nicotinate beta-D-ribonucleotide + ATP + H(+) = deamido-NAD(+) + diphosphate. It participates in cofactor biosynthesis; NAD(+) biosynthesis; deamido-NAD(+) from nicotinate D-ribonucleotide: step 1/1. In terms of biological role, catalyzes the reversible adenylation of nicotinate mononucleotide (NaMN) to nicotinic acid adenine dinucleotide (NaAD). In Desulfatibacillum aliphaticivorans, this protein is Probable nicotinate-nucleotide adenylyltransferase.